Consider the following 81-residue polypeptide: MNPLIPAASVIAAGLAVGLASIGPGVGQGTAAGQAVEGIARQPEAEGKIRGTLLLSLAFMEALTIYGLVVALALLFANPFV.

2 helical membrane passes run 3–23 (PLIP…ASIG) and 57–77 (LAFM…LLFA).

Belongs to the ATPase C chain family. In terms of assembly, F-type ATPases have 2 components, F(1) - the catalytic core - and F(0) - the membrane proton channel. F(1) has five subunits: alpha(3), beta(3), gamma(1), delta(1), epsilon(1). F(0) has four main subunits: a(1), b(1), b'(1) and c(10-14). The alpha and beta chains form an alternating ring which encloses part of the gamma chain. F(1) is attached to F(0) by a central stalk formed by the gamma and epsilon chains, while a peripheral stalk is formed by the delta, b and b' chains.

It is found in the plastid. Its subcellular location is the chloroplast thylakoid membrane. F(1)F(0) ATP synthase produces ATP from ADP in the presence of a proton or sodium gradient. F-type ATPases consist of two structural domains, F(1) containing the extramembraneous catalytic core and F(0) containing the membrane proton channel, linked together by a central stalk and a peripheral stalk. During catalysis, ATP synthesis in the catalytic domain of F(1) is coupled via a rotary mechanism of the central stalk subunits to proton translocation. Its function is as follows. Key component of the F(0) channel; it plays a direct role in translocation across the membrane. A homomeric c-ring of between 10-14 subunits forms the central stalk rotor element with the F(1) delta and epsilon subunits. This is ATP synthase subunit c, chloroplastic from Cycas taitungensis (Prince sago).